Reading from the N-terminus, the 514-residue chain is ATP synthase subunit alpha (514 aa).

170–177 (GDRQIGKS) is a binding site for ATP.

Belongs to the ATPase alpha/beta chains family. As to quaternary structure, F-type ATPases have 2 components, CF(1) - the catalytic core - and CF(0) - the membrane proton channel. CF(1) has five subunits: alpha(3), beta(3), gamma(1), delta(1), epsilon(1). CF(0) has three main subunits: a(1), b(2) and c(9-12). The alpha and beta chains form an alternating ring which encloses part of the gamma chain. CF(1) is attached to CF(0) by a central stalk formed by the gamma and epsilon chains, while a peripheral stalk is formed by the delta and b chains.

It localises to the cell inner membrane. The enzyme catalyses ATP + H2O + 4 H(+)(in) = ADP + phosphate + 5 H(+)(out). In terms of biological role, produces ATP from ADP in the presence of a proton gradient across the membrane. The alpha chain is a regulatory subunit. The chain is ATP synthase subunit alpha from Chromohalobacter salexigens (strain ATCC BAA-138 / DSM 3043 / CIP 106854 / NCIMB 13768 / 1H11).